The sequence spans 355 residues: METLKDKTLQELEELQNDSEAIDQLALESPEVQDLQLEREMALATNRSLAERNLEFQGPLEISRSNLSDRYQELRKLVERCQEQKAKLEKFSSALQPGTLLDLLQVEGMKIEEESEAMAEKFLEGEVPLETFLENFSSMRMLSHLRRVRVEKLQEVVRKPRASQELAGDAPPPRPPPPVRPVPQGTPPVVEEQPQPPLAMPPYPLPYSPSPSLPVGPTAHGALPPAPFPVVSQPSFYSGPLGPTYPAAQLGPRGAAGYSWSPQRSMPPRPGYPGTPMGASGPGYPLRGGRAPSPGYPQQSPYPATGGKPPYPIQPQLPSFPGQPQPSVPLQPPYPPGPAPPYGFPPPPGPAWPGY.

S29 carries the post-translational modification Phosphoserine. Positions 78-167 constitute a VPS37 C-terminal domain; it reads VERCQEQKAK…RKPRASQELA (90 aa). The interval 159-355 is disordered; it reads KPRASQELAG…PPPGPAWPGY (197 aa). Composition is skewed to pro residues over residues 170 to 186 and 194 to 214; these read APPPRPPPPVRPVPQGT and PQPPLAMPPYPLPYSPSPSLP. Positions 291-304 are enriched in low complexity; it reads APSPGYPQQSPYPA. Over residues 321–355 the composition is skewed to pro residues; it reads PGQPQPSVPLQPPYPPGPAPPYGFPPPPGPAWPGY.

This sequence belongs to the VPS37 family. In terms of assembly, component of the ESCRT-I complex (endosomal sorting complex required for transport I) which consists of TSG101, VPS28, a VPS37 protein (VPS37A to -D) and MVB12A or MVB12B in a 1:1:1:1 stoichiometry. Interacts with TSG101, VPS28, MVB12A and MVB12B. Component of the ESCRT-I complex (endosomal sorting complex required for transport I) which consists of TSG101, VPS28, a VPS37 protein (VPS37A to -D) and UBAP1 in a 1:1:1:1 stoichiometry. Interacts with HGS and STAM2. Interacts with CEP55. Post-translationally, phosphorylated by TBK1.

The protein localises to the late endosome membrane. Component of the ESCRT-I complex, a regulator of vesicular trafficking process. Required for the sorting of endocytic ubiquitinated cargos into multivesicular bodies. May be involved in cell growth and differentiation. The protein is Vacuolar protein sorting-associated protein 37C (VPS37C) of Homo sapiens (Human).